A 651-amino-acid polypeptide reads, in one-letter code: Kinesin-like protein KIF22-A (651 aa).

The Kinesin motor domain maps to 31-359 (RVRVAVRLRP…LNFAAKSKQI (329 aa)). 116 to 123 (GPTGAGKT) lines the ATP pocket. Residues 366-413 (QETTQTVVQPAMKRPREETGHIAGSQKRKKSKNDSTESSPNSSMDTAG) are disordered. The span at 401-410 (TESSPNSSMD) shows a compositional bias: polar residues. Residues 452–498 (KRERMALLKKWEESQMEIERLKEKQKELEQKAMEAEARLEKSNNSDL) adopt a coiled-coil conformation. Positions 561 to 564 (GLEN) match the Important for regulated proteolytic degradation motif.

This sequence belongs to the TRAFAC class myosin-kinesin ATPase superfamily. Kinesin family. Ubiquitinated, leading to its subsequent proteasomal degradation.

It is found in the nucleus. Its subcellular location is the cytoplasm. It localises to the cytoskeleton. Functionally, kinesin family member that is involved in spindle formation and the movements of chromosomes during mitosis and meiosis. Binds to microtubules and to DNA. The sequence is that of Kinesin-like protein KIF22-A (kif22-a) from Xenopus laevis (African clawed frog).